A 95-amino-acid polypeptide reads, in one-letter code: Small ribosomal subunit protein uS19 (95 aa).

This sequence belongs to the universal ribosomal protein uS19 family.

In terms of biological role, protein S19 forms a complex with S13 that binds strongly to the 16S ribosomal RNA. This is Small ribosomal subunit protein uS19 from Clostridium kluyveri (strain NBRC 12016).